We begin with the raw amino-acid sequence, 280 residues long: Dopamine receptor-interacting protein 1 (280 aa).

Interacts with DRD1, the dopamine D1 receptor.

Could be a regulator of the dopamine receptor signaling pathway. The chain is Dopamine receptor-interacting protein 1 (DORIP1) from Bos taurus (Bovine).